The primary structure comprises 120 residues: Non-specific lipid-transfer protein (120 aa).

An N-terminal signal peptide occupies residues 1-26 (MASSMSLKLACVVVLCMVVGAPLAQG). 3 disulfide bridges follow: Cys-40-Cys-56, Cys-57-Cys-102, and Cys-77-Cys-116.

Belongs to the plant LTP family.

In terms of biological role, plant non-specific lipid-transfer proteins transfer phospholipids as well as galactolipids across membranes. May play a role in wax or cutin deposition in the cell walls of expanding epidermal cells and certain secretory tissues. This chain is Non-specific lipid-transfer protein, found in Gossypium hirsutum (Upland cotton).